Consider the following 226-residue polypeptide: Transmembrane protein 204 (226 aa).

The Cytoplasmic segment spans residues 1–5; sequence MTVRK. Residues 6-26 form a helical membrane-spanning segment; it reads VVATAVLVALVSLVLNNAAAF. Over 27–103 the chain is Extracellular; sequence TPNWVYQTLE…LQFDMMRACN (77 aa). A helical transmembrane segment spans residues 104–124; sequence LVATAALAAGQLTFVLGLTGL. Residues 125 to 136 lie on the Cytoplasmic side of the membrane; that stretch reads PLLSPDAQCWEE. The chain crosses the membrane as a helical span at residues 137 to 157; sequence AMAAAFQLASFVLVIGLVTFY. Over 158–170 the chain is Extracellular; that stretch reads RIGPYTSLSWSCY. The chain crosses the membrane as a helical span at residues 171 to 191; the sequence is LNIGACLLATLAAAMLIWNVL. At 192 to 226 the chain is on the cytoplasmic side; it reads HRREDCTAPRVIVISRSLTARFRRGLDNDYVESPC.

Its subcellular location is the cell junction. It localises to the adherens junction. The protein resides in the cell membrane. Its function is as follows. Can influence paracellular permeability. Appears to be involved in cell-cell interactions through adherens. The chain is Transmembrane protein 204 (TMEM204) from Bos taurus (Bovine).